Reading from the N-terminus, the 461-residue chain is Bifunctional protein GlmU (461 aa).

Residues 1-232 (MNLQIIILAA…SFEVQGINNR (232 aa)) are pyrophosphorylase. Residues 8-11 (LAAG), lysine 22, glutamine 73, and 78-79 (GT) each bind UDP-N-acetyl-alpha-D-glucosamine. Residue aspartate 102 participates in Mg(2+) binding. Residues glycine 142, glutamate 157, and asparagine 230 each coordinate UDP-N-acetyl-alpha-D-glucosamine. Position 230 (asparagine 230) interacts with Mg(2+). The interval 233-253 (QQLQQLERIWQQRAANQLMEK) is linker. Positions 254–461 (GATLADANRF…WKRPVKRERD (208 aa)) are N-acetyltransferase. The UDP-N-acetyl-alpha-D-glucosamine site is built by arginine 336 and lysine 354. Histidine 366 serves as the catalytic Proton acceptor. UDP-N-acetyl-alpha-D-glucosamine contacts are provided by tyrosine 369 and asparagine 380. Acetyl-CoA is bound by residues alanine 383, 389-390 (NY), serine 408, and alanine 426.

This sequence in the N-terminal section; belongs to the N-acetylglucosamine-1-phosphate uridyltransferase family. It in the C-terminal section; belongs to the transferase hexapeptide repeat family. As to quaternary structure, homotrimer. Requires Mg(2+) as cofactor.

It is found in the cytoplasm. The catalysed reaction is alpha-D-glucosamine 1-phosphate + acetyl-CoA = N-acetyl-alpha-D-glucosamine 1-phosphate + CoA + H(+). The enzyme catalyses N-acetyl-alpha-D-glucosamine 1-phosphate + UTP + H(+) = UDP-N-acetyl-alpha-D-glucosamine + diphosphate. The protein operates within nucleotide-sugar biosynthesis; UDP-N-acetyl-alpha-D-glucosamine biosynthesis; N-acetyl-alpha-D-glucosamine 1-phosphate from alpha-D-glucosamine 6-phosphate (route II): step 2/2. It participates in nucleotide-sugar biosynthesis; UDP-N-acetyl-alpha-D-glucosamine biosynthesis; UDP-N-acetyl-alpha-D-glucosamine from N-acetyl-alpha-D-glucosamine 1-phosphate: step 1/1. It functions in the pathway bacterial outer membrane biogenesis; LPS lipid A biosynthesis. In terms of biological role, catalyzes the last two sequential reactions in the de novo biosynthetic pathway for UDP-N-acetylglucosamine (UDP-GlcNAc). The C-terminal domain catalyzes the transfer of acetyl group from acetyl coenzyme A to glucosamine-1-phosphate (GlcN-1-P) to produce N-acetylglucosamine-1-phosphate (GlcNAc-1-P), which is converted into UDP-GlcNAc by the transfer of uridine 5-monophosphate (from uridine 5-triphosphate), a reaction catalyzed by the N-terminal domain. The chain is Bifunctional protein GlmU from Legionella pneumophila subsp. pneumophila (strain Philadelphia 1 / ATCC 33152 / DSM 7513).